The following is a 978-amino-acid chain: Chitin synthase 3 (978 aa).

Residues 1–13 (MGFNPQGQGNGPN) are compositionally biased toward low complexity. 2 disordered regions span residues 1–95 (MGFN…FDGH) and 108–127 (GHYP…YEYP). Asparagine 72 carries an N-linked (GlcNAc...) asparagine glycan. Asparagine 604 carries N-linked (GlcNAc...) asparagine glycosylation. 7 helical membrane passes run 641–661 (LVNV…TTII), 686–706 (IVNV…FVLA), 719–739 (VLSF…TGYL), 775–795 (LIII…FLYL), 803–823 (SFPQ…VYAF), 908–928 (VILW…DDFI), and 946–966 (VLLY…LWFI).

The protein belongs to the chitin synthase family. Class III subfamily.

The protein localises to the cell membrane. The catalysed reaction is [(1-&gt;4)-N-acetyl-beta-D-glucosaminyl](n) + UDP-N-acetyl-alpha-D-glucosamine = [(1-&gt;4)-N-acetyl-beta-D-glucosaminyl](n+1) + UDP + H(+). In terms of biological role, polymerizes chitin, a structural polymer of the cell wall and septum, by transferring the sugar moiety of UDP-GlcNAc to the non-reducing end of the growing chitin polymer. Is essential for viability. The chain is Chitin synthase 3 from Fusarium oxysporum f. sp. lycopersici (strain 4287 / CBS 123668 / FGSC 9935 / NRRL 34936) (Fusarium vascular wilt of tomato).